Consider the following 389-residue polypeptide: Chorismate synthase (389 aa).

R40 and R46 together coordinate NADP(+). Residues 131 to 133 (RSS), 252 to 253 (NA), G297, 312 to 316 (KPIPT), and R338 contribute to the FMN site.

This sequence belongs to the chorismate synthase family. As to quaternary structure, homotetramer. Requires FMNH2 as cofactor.

The catalysed reaction is 5-O-(1-carboxyvinyl)-3-phosphoshikimate = chorismate + phosphate. Its pathway is metabolic intermediate biosynthesis; chorismate biosynthesis; chorismate from D-erythrose 4-phosphate and phosphoenolpyruvate: step 7/7. Catalyzes the anti-1,4-elimination of the C-3 phosphate and the C-6 proR hydrogen from 5-enolpyruvylshikimate-3-phosphate (EPSP) to yield chorismate, which is the branch point compound that serves as the starting substrate for the three terminal pathways of aromatic amino acid biosynthesis. This reaction introduces a second double bond into the aromatic ring system. This is Chorismate synthase from Lactiplantibacillus plantarum (strain ATCC BAA-793 / NCIMB 8826 / WCFS1) (Lactobacillus plantarum).